The primary structure comprises 385 residues: 3-hydroxyisobutyryl-CoA hydrolase, mitochondrial (385 aa).

The substrate site is built by Glu120, Gly145, Glu168, and Asp176.

It belongs to the enoyl-CoA hydratase/isomerase family.

The protein localises to the mitochondrion. The catalysed reaction is 3-hydroxy-2-methylpropanoyl-CoA + H2O = 3-hydroxy-2-methylpropanoate + CoA + H(+). Its pathway is amino-acid degradation; L-valine degradation. Its function is as follows. Hydrolyzes 3-hydroxyisobutyryl-CoA (HIBYL-CoA), a saline catabolite. Has high activity toward isobutyryl-CoA. Could be an isobutyryl-CoA dehydrogenase that functions in valine catabolism. Also hydrolyzes 3-hydroxypropanoyl-CoA. In Xenopus laevis (African clawed frog), this protein is 3-hydroxyisobutyryl-CoA hydrolase, mitochondrial (hibch).